The primary structure comprises 430 residues: Sesquiterpene synthase 15 (430 aa).

Residues Asp182, Asp186, and Glu335 each coordinate Mg(2+). Positions 182 to 186 (DDIYD) match the DDXXD motif motif.

Belongs to the terpene synthase family. Tpsa subfamily. Mg(2+) serves as cofactor. It depends on Mn(2+) as a cofactor.

The protein operates within secondary metabolite biosynthesis; terpenoid biosynthesis. In terms of biological role, sesquiterpene synthase involved in the biosynthesis of volatile compounds. No activity detected with geranyl diphosphate (GPP) and farnesyl diphosphate (FPP) as substrates. The protein is Sesquiterpene synthase 15 of Solanum lycopersicum (Tomato).